Reading from the N-terminus, the 490-residue chain is Bifunctional protein GlmU (490 aa).

Positions Met1–Arg241 are pyrophosphorylase. UDP-N-acetyl-alpha-D-glucosamine is bound by residues Leu12–Gly15, Lys26, Gln83, Gly88–Thr89, Ser112–Asp114, Gly151, Glu166, Asn181, and Asn239. Asp114 is a Mg(2+) binding site. Position 239 (Asn239) interacts with Mg(2+). Residues Val242–Ala262 form a linker region. Positions Gly263–Glu490 are N-acetyltransferase. Residues Arg344 and Lys362 each contribute to the UDP-N-acetyl-alpha-D-glucosamine site. Catalysis depends on His374, which acts as the Proton acceptor. Residues Tyr377 and Asn388 each contribute to the UDP-N-acetyl-alpha-D-glucosamine site. Acetyl-CoA is bound by residues Ala391, Asn397–Tyr398, Ser416, and Ala434. Residues Arg462 to Glu490 form a disordered region. The span at Gly467–Glu490 shows a compositional bias: low complexity.

The protein in the N-terminal section; belongs to the N-acetylglucosamine-1-phosphate uridyltransferase family. This sequence in the C-terminal section; belongs to the transferase hexapeptide repeat family. Homotrimer. It depends on Mg(2+) as a cofactor.

The protein resides in the cytoplasm. The catalysed reaction is alpha-D-glucosamine 1-phosphate + acetyl-CoA = N-acetyl-alpha-D-glucosamine 1-phosphate + CoA + H(+). It catalyses the reaction N-acetyl-alpha-D-glucosamine 1-phosphate + UTP + H(+) = UDP-N-acetyl-alpha-D-glucosamine + diphosphate. It functions in the pathway nucleotide-sugar biosynthesis; UDP-N-acetyl-alpha-D-glucosamine biosynthesis; N-acetyl-alpha-D-glucosamine 1-phosphate from alpha-D-glucosamine 6-phosphate (route II): step 2/2. Its pathway is nucleotide-sugar biosynthesis; UDP-N-acetyl-alpha-D-glucosamine biosynthesis; UDP-N-acetyl-alpha-D-glucosamine from N-acetyl-alpha-D-glucosamine 1-phosphate: step 1/1. It participates in bacterial outer membrane biogenesis; LPS lipid A biosynthesis. Catalyzes the last two sequential reactions in the de novo biosynthetic pathway for UDP-N-acetylglucosamine (UDP-GlcNAc). The C-terminal domain catalyzes the transfer of acetyl group from acetyl coenzyme A to glucosamine-1-phosphate (GlcN-1-P) to produce N-acetylglucosamine-1-phosphate (GlcNAc-1-P), which is converted into UDP-GlcNAc by the transfer of uridine 5-monophosphate (from uridine 5-triphosphate), a reaction catalyzed by the N-terminal domain. This Mycolicibacterium paratuberculosis (strain ATCC BAA-968 / K-10) (Mycobacterium paratuberculosis) protein is Bifunctional protein GlmU.